Here is a 252-residue protein sequence, read N- to C-terminus: Sugar fermentation stimulation protein homolog (252 aa).

It belongs to the SfsA family.

In Picosynechococcus sp. (strain ATCC 27264 / PCC 7002 / PR-6) (Agmenellum quadruplicatum), this protein is Sugar fermentation stimulation protein homolog.